Consider the following 197-residue polypeptide: ATP-dependent Clp protease proteolytic subunit 1 (197 aa).

Catalysis depends on serine 96, which acts as the Nucleophile. Histidine 121 is a catalytic residue.

This sequence belongs to the peptidase S14 family. Fourteen ClpP subunits assemble into 2 heptameric rings which stack back to back to give a disk-like structure with a central cavity, resembling the structure of eukaryotic proteasomes.

The protein localises to the cytoplasm. The catalysed reaction is Hydrolysis of proteins to small peptides in the presence of ATP and magnesium. alpha-casein is the usual test substrate. In the absence of ATP, only oligopeptides shorter than five residues are hydrolyzed (such as succinyl-Leu-Tyr-|-NHMec, and Leu-Tyr-Leu-|-Tyr-Trp, in which cleavage of the -Tyr-|-Leu- and -Tyr-|-Trp bonds also occurs).. Its function is as follows. Cleaves peptides in various proteins in a process that requires ATP hydrolysis. Has a chymotrypsin-like activity. Plays a major role in the degradation of misfolded proteins. The polypeptide is ATP-dependent Clp protease proteolytic subunit 1 (Synechococcus sp. (strain ATCC 27144 / PCC 6301 / SAUG 1402/1) (Anacystis nidulans)).